The sequence spans 423 residues: Maintenance of mitochondrial morphology protein 1 (423 aa).

The Lumenal portion of the chain corresponds to 1 to 20; sequence MTIPAPIPDKAESSLSFTQG. A helical transmembrane segment spans residues 21–41; sequence LLLGQLSIVILIGAFIKFFIF. The Cytoplasmic portion of the chain corresponds to 42 to 423; the sequence is GDPPSPDVTA…PGSMPGLSMT (382 aa). One can recognise an SMP-LTD domain in the interval 115–327; the sequence is QPESLDWFNV…EPRFQQIELP (213 aa). Disordered regions lie at residues 332-372 and 387-423; these read RKKN…KEVE and SLDV…LSMT. Over residues 355 to 372 the composition is skewed to basic and acidic residues; that stretch reads RSRDVERDLREEARKEVE.

Belongs to the MMM1 family. Homodimer. Component of the ER-mitochondria encounter structure (ERMES) or MDM complex, composed of MMM1, MDM10, MDM12 and MDM34. An MMM1 homodimer associates with one molecule of MDM12 on each side in a pairwise head-to-tail manner, and the SMP-LTD domains of MMM1 and MDM12 generate a continuous hydrophobic tunnel for phospholipid trafficking.

Its subcellular location is the endoplasmic reticulum membrane. Component of the ERMES/MDM complex, which serves as a molecular tether to connect the endoplasmic reticulum (ER) and mitochondria. Components of this complex are involved in the control of mitochondrial shape and protein biogenesis, and function in nonvesicular lipid trafficking between the ER and mitochondria. The MDM12-MMM1 subcomplex functions in the major beta-barrel assembly pathway that is responsible for biogenesis of all outer membrane beta-barrel proteins, and acts in a late step after the SAM complex. The MDM10-MDM12-MMM1 subcomplex further acts in the TOM40-specific pathway after the action of the MDM12-MMM1 complex. Essential for establishing and maintaining the structure of mitochondria and maintenance of mtDNA nucleoids. The protein is Maintenance of mitochondrial morphology protein 1 of Botryotinia fuckeliana (strain B05.10) (Noble rot fungus).